The chain runs to 947 residues: Protein NETWORKED 2A (947 aa).

The 81-residue stretch at 10–90 (YSWWWASHIR…ERYDHLSREL (81 aa)) folds into the NAB domain. The disordered stretch occupies residues 105-131 (VQFPLEDDSDENEDYDGRPRKPPKHLH). Residues 109-118 (LEDDSDENED) show a composition bias toward acidic residues. Coiled coils occupy residues 348–454 (KLAE…IQDV) and 568–619 (VLRD…QKLD). 2 stretches are compositionally biased toward basic and acidic residues: residues 618–627 (LDTTGKDSPH) and 635–644 (LEHEQGHHET). Disordered regions lie at residues 618–675 (LDTT…RTKS), 743–763 (RIES…AVAS), and 911–947 (KNRQ…KLPE). Residues 645 to 660 (VSISPTSNFSVATTPH) show a composition bias toward polar residues. Residues 662 to 675 (QVGDVKRTPGRTKS) are compositionally biased toward basic and acidic residues. The stretch at 722–809 (VHQIQKYQTT…LANIQEEIAR (88 aa)) forms a coiled coil. 2 stretches are compositionally biased toward polar residues: residues 749-761 (QQES…NTAV) and 915-927 (QKQS…SCVS).

The protein belongs to the NET family. In terms of tissue distribution, expressed specifically in pollen.

It is found in the cell membrane. Plant-specific actin binding protein. Associates with F-actin at the plasma membrane in growing pollen tubes. May be part of a membrane-cytoskeletal adapter complex. In Arabidopsis thaliana (Mouse-ear cress), this protein is Protein NETWORKED 2A.